The sequence spans 544 residues: Membrane protein insertase YidC (544 aa).

A disordered region spans residues 29 to 58; the sequence is TPKADPSATTQTLNPTSSESEDYVPTSSDS. Residues 35 to 46 are compositionally biased toward polar residues; it reads SATTQTLNPTSS. The next 3 helical transmembrane spans lie at 341–361, 421–441, and 499–519; these read FVLL…IIAI, GGCF…YVFL, and PVIF…YWLV.

Belongs to the OXA1/ALB3/YidC family. Type 1 subfamily. As to quaternary structure, interacts with the Sec translocase complex via SecD. Specifically interacts with transmembrane segments of nascent integral membrane proteins during membrane integration.

The protein localises to the cell inner membrane. In terms of biological role, required for the insertion and/or proper folding and/or complex formation of integral membrane proteins into the membrane. Involved in integration of membrane proteins that insert both dependently and independently of the Sec translocase complex, as well as at least some lipoproteins. Aids folding of multispanning membrane proteins. The protein is Membrane protein insertase YidC of Pseudoalteromonas translucida (strain TAC 125).